The primary structure comprises 644 residues: Exoribonuclease 2 (644 aa).

In terms of domain architecture, RNB spans 189–516 (REDLTALDFV…NHRLLKAVIK (328 aa)). The S1 motif domain occupies 561 to 643 (DTRFAAEIVD…ETRSIIARPV (83 aa)).

The protein belongs to the RNR ribonuclease family. RNase II subfamily.

It is found in the cytoplasm. The catalysed reaction is Exonucleolytic cleavage in the 3'- to 5'-direction to yield nucleoside 5'-phosphates.. Functionally, involved in mRNA degradation. Hydrolyzes single-stranded polyribonucleotides processively in the 3' to 5' direction. The protein is Exoribonuclease 2 of Escherichia coli (strain ATCC 8739 / DSM 1576 / NBRC 3972 / NCIMB 8545 / WDCM 00012 / Crooks).